A 489-amino-acid polypeptide reads, in one-letter code: 2-(3-amino-3-carboxypropyl)histidine synthase subunit 2 (489 aa).

Met1 is subject to N-acetylmethionine. Ser7 carries the phosphoserine modification. Cys89, Cys110, and Cys341 together coordinate [4Fe-4S] cluster. Position 435 is a phosphothreonine (Thr435). Residues Ser446 and Ser456 each carry the phosphoserine modification. Thr467 is subject to Phosphothreonine. Ser488 carries the post-translational modification Phosphoserine.

It belongs to the DPH1/DPH2 family. DPH2 subfamily. In terms of assembly, component of the 2-(3-amino-3-carboxypropyl)histidine synthase complex composed of DPH1, DPH2, DPH3 and a NADH-dependent reductase. Interacts with DPH1. Requires [4Fe-4S] cluster as cofactor. As to expression, strongly expressed in skeletal muscle. Moderately expressed in heart, small intestine, liver, pancreas, testis and colon. Weakly expressed in brain, placenta, kidney, spleen, thymus, prostate, ovary and lymphocytes.

It participates in protein modification; peptidyl-diphthamide biosynthesis. In terms of biological role, required for the first step of diphthamide biosynthesis, a post-translational modification of histidine which occurs in elongation factor 2. DPH1 and DPH2 transfer a 3-amino-3-carboxypropyl (ACP) group from S-adenosyl-L-methionine (SAM) to a histidine residue, the reaction is assisted by a reduction system comprising DPH3 and a NADH-dependent reductase. Facilitates the reduction of the catalytic iron-sulfur cluster found in the DPH1 subunit. This chain is 2-(3-amino-3-carboxypropyl)histidine synthase subunit 2 (DPH2), found in Homo sapiens (Human).